The primary structure comprises 1302 residues: 1-phosphatidylinositol 4,5-bisphosphate phosphodiesterase gamma-1 (1302 aa).

Ala2 carries the N-acetylalanine modification. The 116-residue stretch at 27–142 (RSLEVGTVMT…WIKGLTWLME (116 aa)) folds into the PH 1 domain. Residues 152–187 (QIERWLRKQFYSVDRNREDRISAKDLKNMLSQVNYR) enclose the EF-hand domain. Asp165, Asn167, Glu169, Arg171, and Asp176 together coordinate Ca(2+). Residues 320-464 (DTMNNPLSHY…LRRKILIKHK (145 aa)) enclose the PI-PLC X-box domain. Catalysis depends on residues His335 and His380. The region spanning 489-523 (SIKNGILYLEDPVNHEWYPHYFVLTSSKIYYSEET) is the PH 2; first part domain. Tyr506 bears the Phosphotyrosine mark. The interval 522 to 545 (ETSSDQGNEDEEEPKEASSSTELH) is disordered. 2 SH2 domains span residues 550–657 (WFHG…SEPV) and 668–756 (WYHA…RYPI). Tyr771 is modified (phosphotyrosine; by SYK). Position 775 is a phosphotyrosine (Tyr775). Tyr783 is subject to Phosphotyrosine; by ITK, SYK and TXK. One can recognise an SH3 domain in the interval 791–851 (TFKCAVKALF…PSNYVEEMIN (61 aa)). Residues 895 to 931 (FVFSISMPSVAQWSLDVAADSQEELQDWVKKIREVAQ) enclose the PH 2; second part domain. Positions 953 to 1070 (LSELVVYCRP…GYVLQPSTMR (118 aa)) constitute a PI-PLC Y-box domain. Position 977 is a phosphotyrosine (Tyr977). Residues 1071-1194 (DEAFDPFDKS…TGYRAVPLKN (124 aa)) form the C2 domain. 4 positions are modified to phosphoserine: Ser1221, Ser1227, Ser1233, and Ser1248. Position 1253 is a phosphotyrosine (Tyr1253). Position 1263 is a phosphoserine (Ser1263).

In terms of assembly, interacts (via SH2 domain) with FGFR1, FGFR2, FGFR3 and FGFR4 (phosphorylated). Interacts with RALGPS1. Interacts (via SH2 domains) with VIL1 (phosphorylated at C-terminus tyrosine phosphorylation sites). Interacts (via SH2 domain) with RET. Interacts with AGAP2 via its SH3 domain. Interacts with LAT (phosphorylated) upon TCR activation. Interacts (via SH3 domain) with the Pro-rich domain of TNK1. Associates with BLNK, VAV1, GRB2 and NCK1 in a B-cell antigen receptor-dependent fashion. Interacts with CBLB in activated T-cells; which inhibits phosphorylation. Interacts with SHB. Interacts (via SH3 domain) with the Arg/Gly-rich-flanked Pro-rich domains of KHDRBS1/SAM68. This interaction is selectively regulated by arginine methylation of KHDRBS1/SAM68. Interacts with INPP5D/SHIP1, THEMIS and CLNK. Interacts with FLT4 and KIT. Interacts with AXL. Interacts with SYK; activates PLCG1. Interacts with FLT1 (tyrosine-phosphorylated). Interacts (via SH2 domain) with PDGFRA and PDGFRB (tyrosine phosphorylated). Interacts with PIP5K1C. Interacts with NTRK1 and NTRK2 (phosphorylated upon ligand-binding). Interacts with TESPA1. Interacts with GRB2, LAT and THEMIS upon TCR activation in thymocytes; the association is weaker in the absence of TESPA1. Interacts (via C-terminal proline-rich domain (PRD)) with PLCG1 (via SH3 domain); this interaction leads to guanine nucleotide exchange from PlCG1 to DNM1 and enhances DNM1-dependent endocytosis. The cofactor is Ca(2+). Post-translationally, tyrosine phosphorylated in response to signaling via activated FLT3, KIT and PDGFRA. Tyrosine phosphorylated by activated FGFR1, FGFR2, FGFR3 and FGFR4. Tyrosine phosphorylated by activated FLT1 and KDR. Tyrosine phosphorylated by activated PDGFRB. The receptor-mediated activation of PLCG1 involves its phosphorylation by tyrosine kinases in response to ligation of a variety of growth factor receptors and immune system receptors. For instance, SYK phosphorylates and activates PLCG1 in response to ligation of the B-cell receptor. Phosphorylated by ITK and TXK on Tyr-783 upon TCR activation in T-cells. May be dephosphorylated by PTPRJ. In terms of processing, ubiquitinated by CBLB in activated T-cells.

It is found in the cell projection. The protein localises to the lamellipodium. The protein resides in the ruffle. The enzyme catalyses a 1,2-diacyl-sn-glycero-3-phospho-(1D-myo-inositol-4,5-bisphosphate) + H2O = 1D-myo-inositol 1,4,5-trisphosphate + a 1,2-diacyl-sn-glycerol + H(+). It carries out the reaction a 1,2-diacyl-sn-glycero-3-phospho-(1D-myo-inositol) + H2O = 1D-myo-inositol 1-phosphate + a 1,2-diacyl-sn-glycerol + H(+). Activated by phosphorylation on tyrosine residues. Mediates the production of the second messenger molecules diacylglycerol (DAG) and inositol 1,4,5-trisphosphate (IP3). Plays an important role in the regulation of intracellular signaling cascades. Becomes activated in response to ligand-mediated activation of receptor-type tyrosine kinases, such as PDGFRA, PDGFRB, EGFR, FGFR1, FGFR2, FGFR3 and FGFR4. Plays a role in actin reorganization and cell migration. Guanine nucleotide exchange factor that binds the GTPase DNM1 and catalyzes the dissociation of GDP, allowing a GTP molecule to bind in its place, therefore enhancing DNM1-dependent endocytosis. The sequence is that of 1-phosphatidylinositol 4,5-bisphosphate phosphodiesterase gamma-1 from Mus musculus (Mouse).